Here is a 1668-residue protein sequence, read N- to C-terminus: Chitin synthase chs-2 (1668 aa).

Residues 1–19 (MMNTLDHRPLGRMETMEGK) show a composition bias toward basic and acidic residues. The disordered stretch occupies residues 1 to 51 (MMNTLDHRPLGRMETMEGKPDEDEVPTSSNSDAKGKGYYYSSGTVPTDDST). Residues 1–116 (MMNTLDHRPL…HGFWHDASLQ (116 aa)) lie on the Cytoplasmic side of the membrane. The chain crosses the membrane as a helical span at residues 117–137 (VLKLATFLVLFLLTLGSAVVA). At 138-176 (KSTFILMTSAIGWGGQTITICNQVISEATQNTVKLKNAH) the chain is on the extracellular side. The helical transmembrane segment at 177–197 (VVKWVWATLLALSAPEALCFV) threads the bilayer. The Cytoplasmic portion of the chain corresponds to 198-212 (RSMHRTMFRNVKRPT). Residues 213-233 (FIQFVFVLIIETFHSIGVGIL) form a helical membrane-spanning segment. The Extracellular portion of the chain corresponds to 234–242 (VFRIFPDLD). A helical transmembrane segment spans residues 243-263 (AVTAAQLTNAMCFVPAILSVI). The Cytoplasmic segment spans residues 264 to 271 (SRKPNKSA). The chain crosses the membrane as a helical span at residues 272–292 (LLLVIIDFAAIAAQSSGFWAL). Topologically, residues 293–301 (PMFLPNLQK) are extracellular. The helical transmembrane segment at 302 to 322 (HLVAIPVSLTLISLAWWQNFV) threads the bilayer. At 323 to 347 (HRDSVFPPVRTLAKFAQRLSERRSK) the chain is on the cytoplasmic side. The chain crosses the membrane as a helical span at residues 348 to 368 (TYAFVSLWKICIYVVCCFLFI). Over 369-487 (SSRMKIEDML…IYSNYVERNQ (119 aa)) the chain is Extracellular. N-linked (GlcNAc...) asparagine glycosylation is present at Asn396. The helical transmembrane segment at 488–508 (LTMAYDALWLVIFQFGAVFVC) threads the bilayer. The Cytoplasmic segment spans residues 509-522 (YHSSKFACKVMMQR). The chain crosses the membrane as a helical span at residues 523–543 (MGFALPMALSVPVTVLLLSTN). The Extracellular segment spans residues 544 to 576 (CRMRQKDSCYGTNVLTVELFWQCNGASMSLADF). The helical transmembrane segment at 577–597 (ILTPQTWIWLCWLASQFWITI) threads the bilayer. The Cytoplasmic portion of the chain corresponds to 598 to 1045 (HLWNPKHERL…ISIWYIIYQL (448 aa)). The chain crosses the membrane as a helical span at residues 1046–1066 (VMLISSILGPGTIFVMIIGAI). Residues 1067 to 1074 (SISFSIDT) lie on the Extracellular side of the membrane. A helical membrane pass occupies residues 1075–1095 (LISLVIVSIPVVVFIVVCLTA). The Cytoplasmic portion of the chain corresponds to 1096–1100 (KPEHQ). Residues 1101 to 1121 (LICAQTIGAIFAMLMTAVVVG) traverse the membrane as a helical segment. Topologically, residues 1122–1136 (TSLQLQKDGLLSPHS) are extracellular. The helical transmembrane segment at 1137 to 1157 (MFTVAVATSFLTAAILHPLEF) threads the bilayer. Position 1158 (Thr1158) is a topological domain, cytoplasmic. A helical transmembrane segment spans residues 1159–1179 (CIIPGTIYFLAIPCMYMLLPI). Residues 1180 to 1375 (YSVCNMHTVS…RAGLIAIRNS (196 aa)) are Extracellular-facing. Residues 1192-1216 (TREDPRPTEKNTLAKKTPGNLESGD) are disordered. The stretch at 1280 to 1335 (QIDKCSEADEDEQAEIEDALEMSNQSHAAKKNQKWKQAQSEAWLADKALKRAEREY) forms a coiled coil. N-linked (GlcNAc...) asparagine glycosylation is present at Asn1303. Residues 1376–1396 (HTVYFLMINIVFIISVLVLQI) traverse the membrane as a helical segment. The Cytoplasmic portion of the chain corresponds to 1397 to 1440 (HKDCLNIEWPLGPKFNHTVRPCYANHDDNQKEEVWVMTRLQLEP). Residues 1441-1461 (IGLVFLIFFVSILVIQFLAML) form a helical membrane-spanning segment. Residues 1462–1668 (CHRFGTLAHI…SSGDVELRRF (207 aa)) lie on the Extracellular side of the membrane. Residues 1625–1668 (RLFTAQQDQNSPTSDGNRRKSNSRPWDQPTSSATSSGDVELRRF) form a disordered region. Polar residues-rich tracts occupy residues 1628–1639 (TAQQDQNSPTSD) and 1647–1661 (SRPW…TSSG).

Belongs to the chitin synthase family. Class IV subfamily.

It is found in the cell membrane. The catalysed reaction is [(1-&gt;4)-N-acetyl-beta-D-glucosaminyl](n) + UDP-N-acetyl-alpha-D-glucosamine = [(1-&gt;4)-N-acetyl-beta-D-glucosaminyl](n+1) + UDP + H(+). May be involved in chitin synthesis in the pharynx during larval development. This Caenorhabditis elegans protein is Chitin synthase chs-2.